Here is a 579-residue protein sequence, read N- to C-terminus: Protein PLASTID MOVEMENT IMPAIRED 15 (579 aa).

4 coiled-coil regions span residues 90-161 (EVLK…NEEH), 188-216 (KVLD…IEIE), 383-419 (QKTK…KLES), and 481-501 (LMKT…EERE).

The protein belongs to the WEB family.

Required for the chloroplast avoidance response under high intensity blue light. This avoidance response consists in the relocation of chloroplasts on the anticlinal side of exposed cells. The polypeptide is Protein PLASTID MOVEMENT IMPAIRED 15 (PMI15) (Arabidopsis thaliana (Mouse-ear cress)).